A 931-amino-acid chain; its full sequence is Dipeptidyl aminopeptidase A (931 aa).

Basic residues predominate over residues 1 to 13 (MSASTHSHKRKNS). Residues 1–58 (MSASTHSHKRKNSHLFPQRKSSNSSMDKPFFPNNDSVANTDPQSNENGHTINEIRPTE) are disordered. Residues 1-119 (MSASTHSHKR…GEWSLPEKRS (119 aa)) are Cytoplasmic-facing. The span at 33–50 (NNDSVANTDPQSNENGHT) shows a compositional bias: polar residues. Residues 120–140 (YVLVFTLIALSVLVLLVILIP) traverse the membrane as a helical; Signal-anchor for type II membrane protein segment. Over 141 to 931 (SKLLPTKITR…RFDNTEVLHL (791 aa)) the chain is Lumenal. Residue Asn377 is glycosylated (N-linked (GlcNAc...) asparagine). The active-site Charge relay system is the Ser785. Asn814 carries an N-linked (GlcNAc...) asparagine glycan. Residues Asp863 and His896 each act as charge relay system in the active site.

Belongs to the peptidase S9B family.

It is found in the vacuole membrane. Its function is as follows. Responsible for the proteolytic maturation of the alpha-factor precursor. The polypeptide is Dipeptidyl aminopeptidase A (STE13) (Saccharomyces cerevisiae (strain ATCC 204508 / S288c) (Baker's yeast)).